A 351-amino-acid chain; its full sequence is Probable aldo-keto reductase 2 (351 aa).

Y67 serves as the catalytic Proton donor. H134 provides a ligand contact to substrate. Residue 213-223 coordinates NADP(+); that stretch reads SPLGRGFFSAG. Positions 317-351 are disordered; it reads YASTDDVRGDRYPQAMANTTWQNSETPPLSSWKAQ. The span at 332–351 shows a compositional bias: polar residues; the sequence is MANTTWQNSETPPLSSWKAQ.

The protein belongs to the aldo/keto reductase family.

This is Probable aldo-keto reductase 2 from Oryza sativa subsp. indica (Rice).